The sequence spans 313 residues: ADP,ATP carrier protein (313 aa).

3 Solcar repeats span residues 11–104, 116–208, and 216–302; these read PPFV…FKKM, KWMA…IKPV, and NNFL…LQVL. Helical transmembrane passes span 13–40, 81–105, 114–134, 184–205, and 219–239; these read FVAD…IKLL, TANV…KKMF, YWKW…TSLL, FGPS…YDSI, and LASF…SYPL. Arginine 86 and arginine 98 together coordinate ADP. Arginine 243 serves as a coordination point for ADP. Residues 243–248 form an important for transport activity region; that stretch reads RRRMMM. Residues 243–248 carry the Nucleotide carrier signature motif motif; that stretch reads RRRMMM. The chain crosses the membrane as a helical span at residues 279–299; that stretch reads AGANILRGVAGAGVLSIYDQL.

The protein belongs to the mitochondrial carrier (TC 2.A.29) family. Monomer.

The protein resides in the mitochondrion inner membrane. The enzyme catalyses ADP(in) + ATP(out) = ADP(out) + ATP(in). The matrix-open state (m-state) is inhibited by the membrane-permeable bongkrekic acid (BKA). The cytoplasmic-open state (c-state) is inhibited by the membrane-impermeable toxic inhibitor carboxyatractyloside (CATR). Functionally, ADP:ATP antiporter that mediates import of ADP into the mitochondrial matrix for ATP synthesis, and export of ATP out to fuel the cell. Cycles between the cytoplasmic-open state (c-state) and the matrix-open state (m-state): operates by the alternating access mechanism with a single substrate-binding site intermittently exposed to either the cytosolic (c-state) or matrix (m-state) side of the inner mitochondrial membrane. This Neurospora crassa (strain ATCC 24698 / 74-OR23-1A / CBS 708.71 / DSM 1257 / FGSC 987) protein is ADP,ATP carrier protein (aac).